The sequence spans 289 residues: Mas-related G-protein coupled receptor member G (289 aa).

Over 1-13 (MFSIFNIWGTFNK) the chain is Extracellular. The chain crosses the membrane as a helical span at residues 14 to 34 (VLFFLSLTVSLAGLVGNALLL). Residues 35–52 (WHLGLHIKKGPFNTYLLH) are Cytoplasmic-facing. The helical transmembrane segment at 53-73 (LAAADFLFLSCQVGFSIATIV) threads the bilayer. Over 74–78 (SGHED) the chain is Extracellular. The helical transmembrane segment at 79-99 (TLYFPVTFLWFAVGLWLLAAF) threads the bilayer. The Cytoplasmic portion of the chain corresponds to 100 to 120 (SVDCCLAYMFPSFCSPNRRPR). A helical transmembrane segment spans residues 121–141 (FTSVVLCLVIWALTMPAVLLP). The Extracellular portion of the chain corresponds to 142–164 (ANACGLLKNGMSLLVCLKYHWTS). The helical transmembrane segment at 165 to 185 (VTWLAVLSGMACGASKFLLIF) threads the bilayer. Topologically, residues 186–199 (GNCCSSQPPPKFCK) are cytoplasmic. The helical transmembrane segment at 200–220 (LAQCSGILLFFCRLPLVVYWC) threads the bilayer. Over 221–222 (LR) the chain is Extracellular. Residues 223 to 243 (PVLKFLLPFFFPLATLLACID) form a helical membrane-spanning segment. Residues 244–289 (SSAKPLLYYMKGRQLRKDPLQVALNRALGEESQSGLGGLSLPMHQV) lie on the Cytoplasmic side of the membrane.

The protein belongs to the G-protein coupled receptor 1 family. Mas subfamily.

It is found in the cell membrane. Its function is as follows. Orphan receptor. May regulate nociceptor function and/or development, including the sensation or modulation of pain. This Mus musculus (Mouse) protein is Mas-related G-protein coupled receptor member G (Mrgprg).